The following is a 437-amino-acid chain: GTPase Obg (437 aa).

The Obg domain maps to Ser-2–Leu-160. The 178-residue stretch at Ala-161–Ala-338 folds into the OBG-type G domain. GTP-binding positions include Gly-167–Ser-174, Phe-192–Val-196, Asp-214–Gly-217, Asn-284–Asp-287, and Ser-319–Leu-321. Mg(2+)-binding residues include Ser-174 and Thr-194. In terms of domain architecture, OCT spans Gly-359–Asp-437.

Belongs to the TRAFAC class OBG-HflX-like GTPase superfamily. OBG GTPase family. Monomer. Mg(2+) is required as a cofactor.

The protein resides in the cytoplasm. In terms of biological role, an essential GTPase which binds GTP, GDP and possibly (p)ppGpp with moderate affinity, with high nucleotide exchange rates and a fairly low GTP hydrolysis rate. Plays a role in control of the cell cycle, stress response, ribosome biogenesis and in those bacteria that undergo differentiation, in morphogenesis control. In Streptococcus pyogenes serotype M28 (strain MGAS6180), this protein is GTPase Obg.